The following is a 1130-amino-acid chain: Alpha-mannosidase 2 (1130 aa).

Over 1 to 14 (MRTRVLRCRPFSTR) the chain is Cytoplasmic. A helical; Signal-anchor for type II membrane protein membrane pass occupies residues 15-35 (ILLLLLFVLAFGVYCYFYNAS). The Lumenal segment spans residues 36–1130 (PQNYNKPRIS…MEVKTYKIRF (1095 aa)). Asparagine 117 carries an N-linked (GlcNAc...) asparagine glycan. Positions 133 and 135 each coordinate Zn(2+). Asparagine 166 carries N-linked (GlcNAc...) asparagine glycosylation. Zn(2+) contacts are provided by aspartate 247 and histidine 527. Catalysis depends on aspartate 247, which acts as the Nucleophile. N-linked (GlcNAc...) asparagine glycosylation is found at asparagine 622, asparagine 683, asparagine 1056, and asparagine 1095.

This sequence belongs to the glycosyl hydrolase 38 family. As to quaternary structure, homodimer; disulfide-linked. Zn(2+) serves as cofactor. N-glycosylated.

It localises to the microsome membrane. The protein localises to the golgi apparatus membrane. It catalyses the reaction N(4)-{beta-D-GlcNAc-(1-&gt;2)-alpha-D-Man-(1-&gt;3)-[alpha-D-Man-(1-&gt;3)-[alpha-D-Man-(1-&gt;6)]-alpha-D-Man-(1-&gt;6)]-beta-D-Man-(1-&gt;4)-beta-D-GlcNAc-(1-&gt;4)-beta-D-GlcNAc}-L-asparaginyl-[protein] + 2 H2O = 2 alpha-D-mannopyranose + an N(4)-{beta-D-GlcNAc-(1-&gt;2)-alpha-D-Man-(1-&gt;3)-[alpha-D-Man-(1-&gt;6)]-beta-D-Man-(1-&gt;4)-beta-D-GlcNAc-(1-&gt;4)-beta-D-GlcNAc}-L-asparaginyl-[protein]. It functions in the pathway protein modification; protein glycosylation. Inhibited by swainsonine. Functionally, catalyzes the first committed step in the biosynthesis of complex N-glycans. It controls conversion of high mannose to complex N-glycans; the final hydrolytic step in the N-glycan maturation pathway. The sequence is that of Alpha-mannosidase 2 from Spodoptera frugiperda (Fall armyworm).